Here is a 240-residue protein sequence, read N- to C-terminus: Eukaryotic translation initiation factor 4E-3 (240 aa).

Residues 1-51 form a disordered region; that stretch reads MVVTDSPVSGIMADQNIDPNTTTSPSPKEKHVSAIKAISGDEKAPSKEKKN. The segment covering 17–26 has biased composition (polar residues); it reads IDPNTTTSPS. Residues 39-51 show a composition bias toward basic and acidic residues; it reads SGDEKAPSKEKKN. EIF4G-binding regions lie at residues 65 to 68 and 75 to 111; these read HCFQ and FDNPSSKSNQVIWGSSLRSLYTFGTIEEFWSLYNNIH. Residues 83-88, Lys115, and 133-134 each bind mRNA; these read NQVIWG and WE. A disulfide bridge connects residues Cys138 and Cys176. Residues 159–168 are EIF4G-binding; the sequence is NTLLALVGEQ. MRNA contacts are provided by residues 183-188 and 228-232; these read RARGDR and KTLDR.

It belongs to the eukaryotic initiation factor 4E family. As to quaternary structure, EIF4F is a multi-subunit complex, the composition of which varies with external and internal environmental conditions. It is composed of at least EIF4A, EIF4E and EIF4G. EIF4E is also known to interact with other partners. In higher plants two isoforms of EIF4F have been identified, named isoform EIF4F and isoform EIF(iso)4F. Isoform EIF4F has subunits p220 and p26, whereas isoform EIF(iso)4F has subunits p82 and p28. In terms of processing, according to the redox status, the Cys-138-Cys-176 disulfide bridge may have a role in regulating protein function by affecting its ability to bind capped mRNA.

The protein resides in the nucleus. The protein localises to the cytoplasm. In terms of biological role, component of the protein complex eIF4F, which is involved in the recognition of the mRNA cap, ATP-dependent unwinding of 5'-terminal secondary structure and recruitment of mRNA to the ribosome. Recognizes and binds the 7-methylguanosine-containing mRNA cap during an early step in the initiation of protein synthesis and facilitates ribosome binding by inducing the unwinding of the mRNAs secondary structures. The polypeptide is Eukaryotic translation initiation factor 4E-3 (Arabidopsis thaliana (Mouse-ear cress)).